Consider the following 326-residue polypeptide: Dehydrogenase/reductase SDR family protein 7-like (326 aa).

At 1-17 (MKVQDMDKCAPSSDWNV) the chain is on the cytoplasmic side. A helical; Signal-anchor for type II membrane protein membrane pass occupies residues 18 to 38 (LYWVLGTVLMPVALPLAIINI). Residues 39-326 (WQRFQAQKFR…KLENAEKKST (288 aa)) are Peroxisomal-facing. 57–81 (LITGASSGLGESLAHVFYRAGCRVI) serves as a coordination point for NAD(+). Ser-193 contributes to the substrate binding site. Tyr-206 (proton acceptor) is an active-site residue.

The protein belongs to the short-chain dehydrogenases/reductases (SDR) family.

The protein localises to the peroxisome membrane. Putative oxidoreductase. The sequence is that of Dehydrogenase/reductase SDR family protein 7-like from Drosophila melanogaster (Fruit fly).